The chain runs to 248 residues: tRNA pseudouridine synthase A (248 aa).

The active-site Nucleophile is D55. Substrate is bound at residue Y114.

This sequence belongs to the tRNA pseudouridine synthase TruA family. In terms of assembly, homodimer.

The enzyme catalyses uridine(38/39/40) in tRNA = pseudouridine(38/39/40) in tRNA. Its function is as follows. Formation of pseudouridine at positions 38, 39 and 40 in the anticodon stem and loop of transfer RNAs. This is tRNA pseudouridine synthase A from Rhodopseudomonas palustris (strain ATCC BAA-98 / CGA009).